We begin with the raw amino-acid sequence, 556 residues long: Arginine--tRNA ligase (556 aa).

The 'HIGH' region signature appears at 132–142 (ANPTGDLHLGH).

Belongs to the class-I aminoacyl-tRNA synthetase family. Monomer.

The protein resides in the cytoplasm. It carries out the reaction tRNA(Arg) + L-arginine + ATP = L-arginyl-tRNA(Arg) + AMP + diphosphate. The chain is Arginine--tRNA ligase from Bacillus cereus (strain ATCC 10987 / NRS 248).